A 625-amino-acid polypeptide reads, in one-letter code: Endoglucanase 13 (625 aa).

The first 34 residues, 1 to 34, serve as a signal peptide directing secretion; it reads MAATMNKTPATTFLLIPAAASLVLLLAAAASVEA. Asp91 functions as the Nucleophile in the catalytic mechanism. The active site involves His427. N-linked (GlcNAc...) asparagine glycosylation is present at Asn440. Active-site residues include Asp479 and Glu488. The disordered stretch occupies residues 509 to 530; it reads ADNTPEYTPAPNAPSPSNGGSP.

The protein belongs to the glycosyl hydrolase 9 (cellulase E) family. Expressed in roots and flowers.

The protein resides in the secreted. It catalyses the reaction Endohydrolysis of (1-&gt;4)-beta-D-glucosidic linkages in cellulose, lichenin and cereal beta-D-glucans.. This chain is Endoglucanase 13 (GLU6), found in Oryza sativa subsp. japonica (Rice).